Reading from the N-terminus, the 1580-residue chain is Endoribonuclease Dicer homolog 3 (1580 aa).

Over residues 1-12 (MHSSLEPEKMEE) the composition is skewed to basic and acidic residues. The disordered stretch occupies residues 1-22 (MHSSLEPEKMEEGGGSNSLKRK). The 173-residue stretch at 51 to 223 (VYEVAKNRNI…SPSNYAAQVS (173 aa)) folds into the Helicase ATP-binding domain. Residue 64–71 (LGTGIDKS) coordinates ATP. Positions 170-173 (DECH) match the DECH box motif. In terms of domain architecture, Helicase C-terminal spans 394 to 562 (KLKELFHLLD…SCPPPVKNGH (169 aa)). Positions 581–597 (EEAASTQTMSDPPSRNE) are enriched in polar residues. 2 disordered regions span residues 581–601 (EEAA…QLPP) and 613–638 (QSNG…KKRK). Positions 622–633 (SSKSKSSSSAAG) are enriched in low complexity. The 125-residue stretch at 836–960 (NLIHFANASS…LPPELLARID (125 aa)) folds into the PAZ domain. RNase III domains follow at residues 985–1157 (ASQL…VSGG) and 1198–1340 (LIEL…IDTR). Mg(2+) is bound by residues E1234, D1326, and E1329.

Belongs to the helicase family. Dicer subfamily. As to quaternary structure, interacts with DRB2 and DRB5. Requires Mg(2+) as cofactor. Mn(2+) is required as a cofactor.

The protein localises to the nucleus. It is found in the nucleolus. Its function is as follows. Ribonuclease (RNase) III involved in RNA-mediated post-transcriptional gene silencing (PTGS). Involved in the processing of repeat-associated small interfering RNAs (ra-siRNAs, derived from heterochromatin and DNA repeats such as transposons) by cleaving small dsRNAs into 24 nucleotide ra-siRNAs. Plays a role in antiviral RNA silencing. Involved in the production of viral siRNAs derived from the cabbage leaf curl virus (CaLCuV) and tobacco rattle virus (TRV). Targeted by the viral silencing suppressor (VSR) protein 2b of the cucumber mosaic virus (CMV) that inactivates DCL3 function in RNA silencing. Acts redundantly with DICER-LIKE 1 (DCL1) to promote flowering via repression of FLOWERING LOCUS C (FLC). Does not seem to be involved in microRNAs (miRNAs) processing. This Arabidopsis thaliana (Mouse-ear cress) protein is Endoribonuclease Dicer homolog 3 (DCL3).